The following is a 193-amino-acid chain: PBAN-type neuropeptides (193 aa).

Residues 1 to 19 form the signal peptide; it reads MYGAVLPGLFFIFISCVVA. Position 46 is an isoleucine amide (Ile46). Leu102 and Leu122 each carry leucine amide. Positions 124–158 are disordered; it reads RRLADDTPATPADQEMYRPDPEQIDSRTKYFSPRL. Residues 138–151 are compositionally biased toward basic and acidic residues; sequence EMYRPDPEQIDSRT. 2 positions are modified to leucine amide: Leu158 and Leu168. A propeptide spanning residues 186-193 is cleaved from the precursor; that stretch reads STNKTQST.

It belongs to the pyrokinin family. As to expression, expressed in the mandibular, maxillary and labial neuromeres of the male and female brain-subesophageal ganglions, in the corpora cardiaca and all around the corpora allata, and at a lower level in the brain near the calyx and pedunculus of the mushroom body (at protein level). Expressed in larvae and adult of both sexes (at protein level). In terms of tissue distribution, expressed in corpora cardiaca (CC), corpora allata (CA) and gnathal ganglion (GNG) (at protein level). Expression in CC and CA detected in most animals, in GNG in some (at protein level). Expression not detected in CC, CA, AL or GNG (at protein level). As to expression, expressed in corpora cardiaca (CC), corpora allata (CA), antennal lobe (AL) and gnathal ganglion (GNG) (at protein level). Expression in CC, CA and GNG detected in most animals, expression in AL detected in few (at protein level). In terms of tissue distribution, expressed in corpora cardiaca (CC), corpora allata (CA), antennal lobe (AL) and gnathal ganglion (GNG) (at protein level). Expression in CC, CA and GNG detected in all animals, expression in AL detected in some (at protein level). Expressed in corpora cardiaca (CC), corpora allata (CA), antennal lobe (AL) and gnathal ganglion (GNG) (at protein level). Expression in CC, CA and GNG detected in most animals, expression in AL detected in some animals (at protein level).

It localises to the secreted. A hormone that controls sex pheromone production in female moths and pheromone responsiveness in male. In Agrotis ipsilon (Black cutworm moth), this protein is PBAN-type neuropeptides.